We begin with the raw amino-acid sequence, 105 residues long: Larval cuticle protein 65Ag1 (105 aa).

Positions M1–P18 are cleaved as a signal peptide. Positions P34 to P103 constitute a Chitin-binding type R&amp;R domain.

In terms of biological role, component of the cuticle of the larva. The polypeptide is Larval cuticle protein 65Ag1 (Drosophila melanogaster (Fruit fly)).